The sequence spans 376 residues: tRNA (guanine(26)-N(2))-dimethyltransferase (376 aa).

The Trm1 methyltransferase domain occupies 4-373 (VAVKEGLARI…APFGVVAEVM (370 aa)). Positions 36, 61, 78, 120, and 121 each coordinate S-adenosyl-L-methionine.

Belongs to the class I-like SAM-binding methyltransferase superfamily. Trm1 family.

It catalyses the reaction guanosine(26) in tRNA + 2 S-adenosyl-L-methionine = N(2)-dimethylguanosine(26) in tRNA + 2 S-adenosyl-L-homocysteine + 2 H(+). In terms of biological role, dimethylates a single guanine residue at position 26 of a number of tRNAs using S-adenosyl-L-methionine as donor of the methyl groups. The sequence is that of tRNA (guanine(26)-N(2))-dimethyltransferase from Thermococcus kodakarensis (strain ATCC BAA-918 / JCM 12380 / KOD1) (Pyrococcus kodakaraensis (strain KOD1)).